Reading from the N-terminus, the 664-residue chain is DNA primase (664 aa).

The CHC2-type zinc-finger motif lies at 40–64 (CPFHKEKTPSFTVSPDKQFYYCFGC). The span at 94 to 104 (GMDVPREERGG) shows a compositional bias: basic and acidic residues. The interval 94 to 115 (GMDVPREERGGRGHTPRQPTDS) is disordered. The Toprim domain occupies 262–344 (DEIMVVEGYM…GKRVRFLFLP (83 aa)). Residues glutamate 268, aspartate 312, and aspartate 314 each contribute to the Mg(2+) site. The interval 483-521 (PRKSWNKDKKPWDGKKWDGKKKWDKGGRGDFKAPQRTPV) is disordered. A compositionally biased stretch (basic and acidic residues) spans 487–515 (WNKDKKPWDGKKWDGKKKWDKGGRGDFKA).

It belongs to the DnaG primase family. As to quaternary structure, monomer. Interacts with DnaB. Zn(2+) is required as a cofactor. Requires Mg(2+) as cofactor.

It carries out the reaction ssDNA + n NTP = ssDNA/pppN(pN)n-1 hybrid + (n-1) diphosphate.. In terms of biological role, RNA polymerase that catalyzes the synthesis of short RNA molecules used as primers for DNA polymerase during DNA replication. The chain is DNA primase from Pseudomonas aeruginosa (strain ATCC 15692 / DSM 22644 / CIP 104116 / JCM 14847 / LMG 12228 / 1C / PRS 101 / PAO1).